Here is a 43-residue protein sequence, read N- to C-terminus: MEPAIVLSISMAAVVVAITGISIYTSFGPPSKELNDPFDDHED.

A helical transmembrane segment spans residues A4–Y24.

It belongs to the PsbN family.

Its subcellular location is the cellular thylakoid membrane. In terms of biological role, may play a role in photosystem I and II biogenesis. In Nostoc punctiforme (strain ATCC 29133 / PCC 73102), this protein is Protein PsbN.